A 71-amino-acid chain; its full sequence is Frenatin 2.3S (71 aa).

Residues 1-22 form the signal peptide; it reads MAFLKKSLFLVLFLGLVSLSMG. Positions 21 to 56 are disordered; sequence MGEREKREEEEEEEEENKEEEANEEGKGESEEKRGL. The propeptide occupies 23-54; sequence EREKREEEEEEEEENKEEEANEEGKGESEEKR. A compositionally biased stretch (acidic residues) spans 28–43; it reads EEEEEEEEENKEEEAN. Basic and acidic residues predominate over residues 44 to 55; it reads EEGKGESEEKRG. Gly-70 carries the glycine amide; in Frenatin 2.1S modification.

Belongs to the frog skin active peptide (FSAP) family. Frenatin subfamily. Post-translationally, frenatin 2.3S is not amidated. As to expression, expressed by the skin glands.

The protein localises to the secreted. Antimicrobial peptide with potent activity against Gram-negative bacteria. Shows immunostimulatory actions both in vitro and in vivo. In vitro, is cytotoxic to non-small cell lung adenocarcinoma A549 cells. Also, stimulates production of pro-inflammatory cytokines by mouse peritoneal macrophages and down-regulates production of the anti-inflammatory cytokine IL-10 by lipopolysaccharide (LPS)-stimulated cells. In vivo, intraperitoneal injection in mice enhances the activation state and homing capacity of Th1 type lymphocytes and promotes the recruitment, activation and tumoricidal capacities of peritoneal NK cells. Has a very weak activity in stimulation of insulin release and a weak hemolytic activity. Functionally, antimicrobial peptide with potent activity against some Gram-positive and Gram-negative bacteria. Has a multifunctional mode of action. It displays depolarization and bacterial cell leakage, and can also internalize into bacterial cells and alter specific gene expression involved in bacterial resistance mechanisms. Does not agglutinate bacteria and lipid vesicles, even a high concentrations. Also displays moderate cellular protection against yellow fever virus (YFV)-infected Vero cells without causing significant cytotoxicity. Shows a weak hemolytic activity, and is not cytotoxic to monocytes. Frenatin 2.3S (version without Gly-71) shows no or very weak antibacterial activity, shows no or very weak cytotoxicity to lung adenocarcinoma A549 cells and shows very weak hemolysis. It only stimulates production of pro-inflammatory cytokines IL-23 (but not IL-1beta and TNF-alpha) by mouse peritoneal macrophages and has no effect on the production of the anti-inflammatory cytokine IL-10. Frenatin 2.3S (version without Gly-71) very weakly stimulates insulin release. The protein is Frenatin 2.3S of Sphaenorhynchus lacteus (Orinoco lime treefrog).